A 409-amino-acid polypeptide reads, in one-letter code: MAAATTTTSRPLLLSRQQAAASSLQCRLPRRPGSSLFAGQGQASTPNVRCMAVVDTASAPAPAAARKRSSYDMITLTTWLLKQEQEGVIDNEMTIVLSSISTACKQIASLVQRAPISNLTGVQGATNVQGEDQKKLDVISNEVFSNCLRWSGRTGVIASEEEDVPVAVEESYSGNYIVVFDPLDGSSNIDAAVSTGSIFGIYSPSDECHIGDDATLDEVTQMCIVNVCQPGSNLLAAGYCMYSSSVIFVLTIGTGVYVFTLDPMYGEFVLTQEKVQIPKSGKIYSFNEGNYALWDDKLKKYMDSLKEPGTSGKPYSARYIGSLVGDFHRTMLYGGIYGYPSDQKSKNGKLRLLYECAPMSFIAEQAGGKGSDGHQRVLDIMPTAVHQRVPLYVGSVEEVEKVEKFLSSE.

The N-terminal 49 residues, 1–49, are a transit peptide targeting the chloroplast; the sequence is MAAATTTTSRPLLLSRQQAAASSLQCRLPRRPGSSLFAGQGQASTPNVR. Residues Glu-131, Glu-160, Asp-181, Leu-183, and Asp-184 each coordinate Mg(2+). Position 184 to 187 (184 to 187) interacts with substrate; the sequence is DGSS. An intrachain disulfide couples Cys-223 to Cys-228. Residues Asn-287, Tyr-319, Tyr-337, Tyr-339, and Lys-349 each contribute to the substrate site. Glu-355 lines the Mg(2+) pocket.

It belongs to the FBPase class 1 family. As to quaternary structure, homotetramer. Requires Mg(2+) as cofactor. In terms of tissue distribution, in photosynthetically active tissues, and in the shoot and root apical meristems.

It is found in the plastid. Its subcellular location is the chloroplast. The catalysed reaction is beta-D-fructose 1,6-bisphosphate + H2O = beta-D-fructose 6-phosphate + phosphate. The protein operates within carbohydrate biosynthesis; Calvin cycle. This Triticum aestivum (Wheat) protein is Fructose-1,6-bisphosphatase, chloroplastic (FBP).